The following is a 301-amino-acid chain: Transmembrane protein 178A (301 aa).

The first 25 residues, Met-1–Ala-25, serve as a signal peptide directing secretion. The Extracellular portion of the chain corresponds to Ile-26–Gly-183. N-linked (GlcNAc...) asparagine glycosylation is present at Asn-162. Residues Phe-184–Phe-204 traverse the membrane as a helical segment. Residues Trp-205 to Gly-215 lie on the Cytoplasmic side of the membrane. Residues Leu-216–Val-236 form a helical membrane-spanning segment. Residues Ser-237–Tyr-258 are Extracellular-facing. A helical transmembrane segment spans residues Gly-259–Cys-279. Residues Thr-280–Val-301 are Cytoplasmic-facing.

It belongs to the TMEM178 family.

Its subcellular location is the endoplasmic reticulum membrane. May act as a negative regulator of osteoclast differentiation. The sequence is that of Transmembrane protein 178A (tmem178a) from Danio rerio (Zebrafish).